Consider the following 162-residue polypeptide: Regulatory protein RecX (162 aa).

The protein belongs to the RecX family.

Its subcellular location is the cytoplasm. Its function is as follows. Modulates RecA activity. The protein is Regulatory protein RecX of Xanthomonas oryzae pv. oryzae (strain PXO99A).